Here is a 253-residue protein sequence, read N- to C-terminus: 3-deoxy-manno-octulosonate cytidylyltransferase (253 aa).

This sequence belongs to the KdsB family.

The protein localises to the cytoplasm. The enzyme catalyses 3-deoxy-alpha-D-manno-oct-2-ulosonate + CTP = CMP-3-deoxy-beta-D-manno-octulosonate + diphosphate. Its pathway is nucleotide-sugar biosynthesis; CMP-3-deoxy-D-manno-octulosonate biosynthesis; CMP-3-deoxy-D-manno-octulosonate from 3-deoxy-D-manno-octulosonate and CTP: step 1/1. It functions in the pathway bacterial outer membrane biogenesis; lipopolysaccharide biosynthesis. Functionally, activates KDO (a required 8-carbon sugar) for incorporation into bacterial lipopolysaccharide in Gram-negative bacteria. The sequence is that of 3-deoxy-manno-octulosonate cytidylyltransferase from Neisseria meningitidis serogroup B (strain ATCC BAA-335 / MC58).